Here is a 66-residue protein sequence, read N- to C-terminus: Antimicrobial peptide Eval967 (66 aa).

An N-terminal signal peptide occupies residues 1–22 (MKFSALLPVFFLLLAVIDYCQA). Leucine amide is present on leucine 36. Positions 37-66 (GKRDVKTQKYVDIKRRDLDLDDMLSKLFED) are excised as a propeptide.

This sequence belongs to the non-disulfide-bridged peptide (NDBP) superfamily. Short antimicrobial peptide (group 4) family. Expressed by the venom gland.

Its subcellular location is the secreted. Its function is as follows. Probable antimicrobial peptide. Has no inhibitory activity against herpes simplex virus type 1 (HSV-1). This is Antimicrobial peptide Eval967 from Euscorpiops validus (Scorpion).